We begin with the raw amino-acid sequence, 706 residues long: Dual specificity calcium/calmodulin-dependent 3',5'-cyclic nucleotide phosphodiesterase 1C (706 aa).

M1 bears the N-acetylmethionine mark. The interval 123-146 (EKPRFKSIVHAVQAGIFVERMYRR) is calmodulin-binding. The 378-residue stretch at 151–528 (VGLSYPPAVI…ERWRAKVPKE (378 aa)) folds into the PDEase domain. H228 serves as the catalytic Proton donor. Zn(2+) contacts are provided by H232, H268, D269, and D376. D269 is a binding site for Mg(2+). 2 disordered regions span residues 453–497 (LIDE…INNS) and 524–655 (KVPK…IKPP). Polar residues-rich tracts occupy residues 456-476 (ESSQTGGTGQRRSSLNSINSS) and 483-497 (VKSSGSDGSAPINNS). 3 stretches are compositionally biased toward basic and acidic residues: residues 524 to 554 (KVPKEEKAKKEAEEKARLAAEEKQKEMEAKS), 580 to 597 (RKGDNPRGKNSKGEKAGE), and 603 to 630 (DLKDGKNKADKKDHSNTGNESKKTDGTK). Positions 638 to 647 (APSTSSTSRI) are enriched in polar residues.

Belongs to the cyclic nucleotide phosphodiesterase family. PDE1 subfamily. Homodimer. Zn(2+) is required as a cofactor. It depends on Mg(2+) as a cofactor. Highly expressed in testis and at moderate levels in heart. In terms of tissue distribution, expressed at a moderate level in brain, the cerebellum, testis, heart and olfactory epithelium. As to expression, highly expressed in olfactory epithelium and at very low levels, if any, in other tissues. In the cochlea, expressed in the inner and outer hair cells (at protein level). In the brain, highly expressed in the neurons of the granule layer of the cerebellum, some Purkinje cells, the central amygdaloid nucleus, and the interpolar spinal trigem nucleus and, at moderate levels, in the glomerular and external plexiform layer of the olfactory bulb as well as in parts of the caudate-putamen and olfactory tubercle.

The protein localises to the lysosome. It carries out the reaction a nucleoside 3',5'-cyclic phosphate + H2O = a nucleoside 5'-phosphate + H(+). The catalysed reaction is 3',5'-cyclic GMP + H2O = GMP + H(+). The enzyme catalyses 3',5'-cyclic AMP + H2O = AMP + H(+). Its activity is regulated as follows. Type I PDE are activated by the binding of calmodulin in the presence of Ca(2+). Different splice variants may have different sensitivities to Ca(2+). Exhibits a higher sensitivity to Ca(2+) stimulation than isoforms 1 and 2. Functionally, calmodulin-dependent cyclic nucleotide phosphodiesterase with a dual specificity for cAMP and cGMP, which are key regulators of many important physiological processes. Exhibits high affinity for both cAMP and cGMP. Modulates the amplitude and duration of the cAMP signal in sensory cilia in response to odorant stimulation, hence contributing to the generation of action potentials. Regulates smooth muscle cell proliferation. Regulates the stability of growth factor receptors, including PDGFRB. The chain is Dual specificity calcium/calmodulin-dependent 3',5'-cyclic nucleotide phosphodiesterase 1C from Mus musculus (Mouse).